A 1228-amino-acid chain; its full sequence is Membrane-anchored lipid-binding protein LAM1 (1228 aa).

The Cytoplasmic portion of the chain corresponds to 1–1062; it reads MHEHKAELRL…IFKCFSKVNK (1062 aa). Residues 308–421 enclose the PH domain; the sequence is EKGLSGWLYM…WINTLTSHKR (114 aa). The VASt domain occupies 773–978; that stretch reads EAWCYFQDNF…KTREYLKKFN (206 aa). Residues 1063 to 1083 traverse the membrane as a helical segment; sequence TLYYCLLISAVTNLFFVGKSI. Residues 1084-1228 are Lumenal-facing; the sequence is HSYFSVKSAE…EYNRLSAIPV (145 aa). N-linked (GlcNAc...) asparagine glycosylation occurs at Asn1205.

Belongs to the SIP3 family.

It is found in the mitochondrion membrane. The protein localises to the endoplasmic reticulum membrane. In terms of biological role, involved in mitochondrial fragmentation during programmed cell death in response to high levels of alpha-factor mating pheromone or the drug amiodarone. May be involved in sterol transfer between intracellular membranes. The polypeptide is Membrane-anchored lipid-binding protein LAM1 (Saccharomyces cerevisiae (strain ATCC 204508 / S288c) (Baker's yeast)).